An 81-amino-acid polypeptide reads, in one-letter code: Cytochrome b559 subunit alpha (81 aa).

The chain crosses the membrane as a helical span at residues 21–35; the sequence is VIHALTIPALFLAGW. Histidine 23 lines the heme pocket.

This sequence belongs to the PsbE/PsbF family. In terms of assembly, heterodimer of an alpha subunit and a beta subunit. PSII is composed of 1 copy each of membrane proteins PsbA, PsbB, PsbC, PsbD, PsbE, PsbF, PsbH, PsbI, PsbJ, PsbK, PsbL, PsbM, PsbT, PsbX, PsbY, PsbZ, Psb30/Ycf12, peripheral proteins PsbO, CyanoQ (PsbQ), PsbU, PsbV and a large number of cofactors. It forms dimeric complexes. The cofactor is heme b.

It localises to the cellular thylakoid membrane. Functionally, this b-type cytochrome is tightly associated with the reaction center of photosystem II (PSII). PSII is a light-driven water:plastoquinone oxidoreductase that uses light energy to abstract electrons from H(2)O, generating O(2) and a proton gradient subsequently used for ATP formation. It consists of a core antenna complex that captures photons, and an electron transfer chain that converts photonic excitation into a charge separation. The protein is Cytochrome b559 subunit alpha of Synechococcus sp. (strain JA-3-3Ab) (Cyanobacteria bacterium Yellowstone A-Prime).